The following is a 189-amino-acid chain: Large ribosomal subunit protein bL9 (189 aa).

Belongs to the bacterial ribosomal protein bL9 family.

Binds to the 23S rRNA. The polypeptide is Large ribosomal subunit protein bL9 (Brucella canis (strain ATCC 23365 / NCTC 10854 / RM-666)).